The sequence spans 382 residues: Ribosomal RNA large subunit methyltransferase G (382 aa).

The protein belongs to the methyltransferase superfamily. RlmG family.

Its subcellular location is the cytoplasm. The catalysed reaction is guanosine(1835) in 23S rRNA + S-adenosyl-L-methionine = N(2)-methylguanosine(1835) in 23S rRNA + S-adenosyl-L-homocysteine + H(+). In terms of biological role, specifically methylates the guanine in position 1835 (m2G1835) of 23S rRNA. The chain is Ribosomal RNA large subunit methyltransferase G from Aliivibrio fischeri (strain MJ11) (Vibrio fischeri).